The primary structure comprises 302 residues: tRNA-cytidine(32) 2-sulfurtransferase (302 aa).

A PP-loop motif motif is present at residues 57–62; that stretch reads SGGKDS. [4Fe-4S] cluster contacts are provided by cysteine 132, cysteine 135, and cysteine 223.

The protein belongs to the TtcA family. Homodimer. Mg(2+) serves as cofactor. The cofactor is [4Fe-4S] cluster.

The protein localises to the cytoplasm. It carries out the reaction cytidine(32) in tRNA + S-sulfanyl-L-cysteinyl-[cysteine desulfurase] + AH2 + ATP = 2-thiocytidine(32) in tRNA + L-cysteinyl-[cysteine desulfurase] + A + AMP + diphosphate + H(+). It participates in tRNA modification. In terms of biological role, catalyzes the ATP-dependent 2-thiolation of cytidine in position 32 of tRNA, to form 2-thiocytidine (s(2)C32). The sulfur atoms are provided by the cysteine/cysteine desulfurase (IscS) system. This Marinobacter nauticus (strain ATCC 700491 / DSM 11845 / VT8) (Marinobacter aquaeolei) protein is tRNA-cytidine(32) 2-sulfurtransferase.